A 495-amino-acid chain; its full sequence is Probable histidine ammonia-lyase (495 aa).

Positions 141–143 (ASG) form a cross-link, 5-imidazolinone (Ala-Gly). Ser142 is subject to 2,3-didehydroalanine (Ser).

This sequence belongs to the PAL/histidase family. Post-translationally, contains an active site 4-methylidene-imidazol-5-one (MIO), which is formed autocatalytically by cyclization and dehydration of residues Ala-Ser-Gly.

Its subcellular location is the cytoplasm. The catalysed reaction is L-histidine = trans-urocanate + NH4(+). The protein operates within amino-acid degradation; L-histidine degradation into L-glutamate; N-formimidoyl-L-glutamate from L-histidine: step 1/3. This is Probable histidine ammonia-lyase from Thermoplasma volcanium (strain ATCC 51530 / DSM 4299 / JCM 9571 / NBRC 15438 / GSS1).